The chain runs to 351 residues: MWLSLVILGVASAIVNVSTQESCTTPNGETATCLPIESCKIFWDYVVTSGADPEINSFLRASLCRQGNYVVCCGSTLKFNSALPDRTECGLQDDFKVLGGEDTDLGEYPWMALLQQTKTSGAKSFGCGGSLISDRYVLTAAHCVVSSSYTVTMVRLGEWDLRATQDCVGSGSYQYCSPPPQDIGIESITSHPNYEKSSRGVFNDIALIRLARPVNRNKYVQPICLPLPTERTPVGENLLVAGWGATETKAQSDKKQKLKLPVTDLPACKTLYAKHNKIINDKMICAGGLKGKDSCKGDSGGPLFGQTGAGNAQFYIEGIVSYGAICGTEGFPAIYTRVSDHLDWIKQNVRV.

The N-terminal stretch at 1 to 19 (MWLSLVILGVASAIVNVST) is a signal peptide. Asn16 is a glycosylation site (N-linked (GlcNAc...) asparagine). Residues 22 to 73 (SCTTPNGETATCLPIESCKIFWDYVVTSGADPEINSFLRASLCRQGNYVVCC) form the Clip domain. Intrachain disulfides connect Cys23–Cys72, Cys33–Cys64, Cys39–Cys73, Cys89–Cys224, Cys127–Cys143, Cys167–Cys176, Cys268–Cys285, and Cys295–Cys326. Positions 97-350 (VLGGEDTDLG…HLDWIKQNVR (254 aa)) constitute a Peptidase S1 domain. His142 functions as the Charge relay system in the catalytic mechanism. Residues Glu158, Asp160, Ala163, and Asp166 each contribute to the Ca(2+) site. The active-site Charge relay system is the Asp204. Ser299 acts as the Charge relay system in catalysis.

The protein belongs to the peptidase S1 family. CLIP subfamily. As to quaternary structure, in the active form, heterodimer of a light chain and a heavy chain; disulfide-linked. Proteolytically cleaved.

The protein localises to the secreted. Its activity is regulated as follows. Cleavage of PPAF2 is Ca(2+)-independent. Inhibited by heparin. Its function is as follows. Serine endopeptidase which, by cleaving prophenoloxidase activating factor PPAF2, is required for the activation of the prophenoloxidase cascade probably following the recognition of pathogen-derived products. This Holotrichia diomphalia (Korean black chafer) protein is Phenoloxidase-activating factor 3.